Consider the following 282-residue polypeptide: Armadillo repeat-containing protein 1 (282 aa).

Position 1 is an N-acetylmethionine (M1). An ARM repeat occupies 39–81; that stretch reads GCLPGLILFMDHPNPPVVHSALLALRYLAECRANREKMKGELG. Position 137 is a phosphothreonine (T137). 4 positions are modified to phosphoserine: S189, S246, S260, and S267. The interval 239–261 is disordered; the sequence is DYLPEDESPTKEQDKAVSRVGSH. Basic and acidic residues predominate over residues 246-255; that stretch reads SPTKEQDKAV.

Interacts with mitochondrial contact site and cristae organizing system (MICOS) complex components IMMT/MIC60 and MICOS10/MIC10. Interacts with mitochondrial outer membrane sorting assembly machinery (SAM) complex components SAMM50 and MTX1.

The protein localises to the cytoplasm. The protein resides in the mitochondrion. It is found in the mitochondrion outer membrane. Its function is as follows. In association with mitochondrial contact site and cristae organizing system (MICOS) complex components and mitochondrial outer membrane sorting assembly machinery (SAM) complex components may regulate mitochondrial dynamics playing a role in determining mitochondrial length, distribution and motility. This is Armadillo repeat-containing protein 1 (Armc1) from Mus musculus (Mouse).